A 248-amino-acid chain; its full sequence is Probable transcriptional regulatory protein Mchl_0946 (248 aa).

The protein belongs to the TACO1 family.

Its subcellular location is the cytoplasm. The polypeptide is Probable transcriptional regulatory protein Mchl_0946 (Methylorubrum extorquens (strain CM4 / NCIMB 13688) (Methylobacterium extorquens)).